The primary structure comprises 203 residues: Holliday junction branch migration complex subunit RuvA (203 aa).

Residues 1–63 form a domain I region; it reads MIGQLSGKVD…EEHIHLYGFL (63 aa). The tract at residues 64–142 is domain II; the sequence is NLEEKIFFNL…KISSGSAIIK (79 aa). Residues 143 to 149 are flexible linker; the sequence is ESLNIKH. Positions 150-203 are domain III; the sequence is ITPVASNEVIKALVNLGFSRFEAQNAVQGIITQNPEISIDELIKTALKNRNSNF.

This sequence belongs to the RuvA family. Homotetramer. Forms an RuvA(8)-RuvB(12)-Holliday junction (HJ) complex. HJ DNA is sandwiched between 2 RuvA tetramers; dsDNA enters through RuvA and exits via RuvB. An RuvB hexamer assembles on each DNA strand where it exits the tetramer. Each RuvB hexamer is contacted by two RuvA subunits (via domain III) on 2 adjacent RuvB subunits; this complex drives branch migration. In the full resolvosome a probable DNA-RuvA(4)-RuvB(12)-RuvC(2) complex forms which resolves the HJ.

The protein resides in the cytoplasm. In terms of biological role, the RuvA-RuvB-RuvC complex processes Holliday junction (HJ) DNA during genetic recombination and DNA repair, while the RuvA-RuvB complex plays an important role in the rescue of blocked DNA replication forks via replication fork reversal (RFR). RuvA specifically binds to HJ cruciform DNA, conferring on it an open structure. The RuvB hexamer acts as an ATP-dependent pump, pulling dsDNA into and through the RuvAB complex. HJ branch migration allows RuvC to scan DNA until it finds its consensus sequence, where it cleaves and resolves the cruciform DNA. This Rickettsia africae (strain ESF-5) protein is Holliday junction branch migration complex subunit RuvA.